The primary structure comprises 234 residues: Sugar fermentation stimulation protein A (234 aa).

A DNA-binding region (H-T-H motif) is located at residues 201–220 (LLSEAQNKGVEVLAYKAELS).

This sequence belongs to the SfsA family.

Functionally, binds to DNA non-specifically. Could be a regulatory factor involved in maltose metabolism. This is Sugar fermentation stimulation protein A from Salmonella arizonae (strain ATCC BAA-731 / CDC346-86 / RSK2980).